The sequence spans 436 residues: UPF0597 protein YhaM (436 aa).

This sequence belongs to the UPF0597 family.

The polypeptide is UPF0597 protein YhaM (Escherichia coli O127:H6 (strain E2348/69 / EPEC)).